The chain runs to 270 residues: Tryptophan synthase alpha chain (270 aa).

Catalysis depends on proton acceptor residues Glu-51 and Asp-62.

It belongs to the TrpA family. As to quaternary structure, tetramer of two alpha and two beta chains.

It carries out the reaction (1S,2R)-1-C-(indol-3-yl)glycerol 3-phosphate + L-serine = D-glyceraldehyde 3-phosphate + L-tryptophan + H2O. It participates in amino-acid biosynthesis; L-tryptophan biosynthesis; L-tryptophan from chorismate: step 5/5. Functionally, the alpha subunit is responsible for the aldol cleavage of indoleglycerol phosphate to indole and glyceraldehyde 3-phosphate. This is Tryptophan synthase alpha chain from Methanothermobacter thermautotrophicus (strain ATCC 29096 / DSM 1053 / JCM 10044 / NBRC 100330 / Delta H) (Methanobacterium thermoautotrophicum).